The chain runs to 839 residues: Flocculation protein FLO11 (839 aa).

Positions 1 to 22 (MVSLRSIFTSSILAAGLTRAHG) are cleaved as a signal peptide. A Flo11 1 domain is found at 24 to 194 (SGKTCPTSEV…PKKCSSDCGV (171 aa)). 4 disulfides stabilise this stretch: Cys28-Cys188, Cys37-Cys167, Cys129-Cys192, and Cys143-Cys152. Asn79 carries N-linked (GlcNAc...) asparagine glycosylation. The tract at residues 187-342 (KCSSDCGVEP…GPTCPTSEVS (156 aa)) is disordered. Over residues 198–317 (TSDEPEEPTT…EPTTSEEPEE (120 aa)) the composition is skewed to acidic residues. The 171-residue stretch at 332 to 502 (EGPTCPTSEV…PKKCSSNCGV (171 aa)) folds into the Flo11 2 domain. The N-linked (GlcNAc...) asparagine glycan is linked to Asn387. The disordered stretch occupies residues 496-606 (CSSNCGVEPT…LVPTTKTETD (111 aa)). Acidic residues predominate over residues 506-592 (TSDEPEEPTT…PTTSDEEPGT (87 aa)). Over residues 593–606 (TEEPLVPTTKTETD) the composition is skewed to low complexity.

It belongs to the flocculin family. Highly divergent.

In terms of biological role, homophilic binding protein that enables kin discrimination in heterogeneous yeast populations by mediating homotypic cell-cell interactions during flocculation, a reversible and asexual process in which cells adhere to form aggregates (flocs). The sequence is that of Flocculation protein FLO11 from Komagataella phaffii (strain GS115 / ATCC 20864) (Yeast).